The chain runs to 390 residues: 4-O-beta-D-mannosyl-D-glucose phosphorylase (390 aa).

This sequence belongs to the glycosyl hydrolase 130 family.

The catalysed reaction is 4-O-beta-D-mannopyranosyl-D-glucopyranose + phosphate = alpha-D-mannose 1-phosphate + D-glucose. Its function is as follows. Converts 4-O-beta-D-mannopyranosyl-D-glucopyranose (Man-Glc) to mannose 1-phosphate (Man1P) and glucose. Involved in a mannan catabolic pathway which feeds into glycolysis. The chain is 4-O-beta-D-mannosyl-D-glucose phosphorylase from Bacteroides fragilis (strain ATCC 25285 / DSM 2151 / CCUG 4856 / JCM 11019 / LMG 10263 / NCTC 9343 / Onslow / VPI 2553 / EN-2).